A 758-amino-acid chain; its full sequence is Vitamin K-dependent gamma-carboxylase (758 aa).

The interval 1 to 34 (MAVSARPARAPRGSDKVKKDKAAQTSGPRQGSRM) is disordered. Alanine 2 bears the N-acetylalanine mark. The Cytoplasmic portion of the chain corresponds to 2–60 (AVSARPARAPRGSDKVKKDKAAQTSGPRQGSRMGKLLGFEWTDVSSWERLVTLLNRPTD). Positions 12-22 (RGSDKVKKDKA) are enriched in basic and acidic residues. The helical transmembrane segment at 61–81 (PAGLAVFRFLFGLMMVLDIPQ) threads the bilayer. The Lumenal segment spans residues 82–113 (ERGLSSLDRRYLDGLEVCRFPLLDALQPLPLD). A disulfide bridge connects residues cysteine 99 and cysteine 450. Residues 114 to 134 (WMYLIYTIMFLGALGMMLGLC) traverse the membrane as a helical segment. Topologically, residues 135–136 (YR) are cytoplasmic. The chain crosses the membrane as a helical span at residues 137-157 (ISCVLFLLPYWYVFLLDKTSW). Residues 158–292 (NNHSYLYGLL…VSYFHCMNSQ (135 aa)) lie on the Lumenal side of the membrane. A helical membrane pass occupies residues 293 to 313 (LFSIGMFPYVMLASSPLFCSP). Topologically, residues 314-363 (EWPRKLVAHCPKKLQELLPLRTAPQPSTSCMYKRSRARGSQKPGLRHKLS) are cytoplasmic. The helical transmembrane segment at 364–384 (TAFTLLYLLEQLFLPYSHFLT) threads the bilayer. Topologically, residues 385 to 758 (QGYNNWTNGL…PDSHPVHSEF (374 aa)) are lumenal. Residues 727 to 758 (PFEPAGEPSPVNTDSSNPNPPEPDSHPVHSEF) are disordered. The span at 749-758 (PDSHPVHSEF) shows a compositional bias: basic and acidic residues.

As to quaternary structure, monomer. May interact with CALU. The N-terminus is blocked.

The protein localises to the endoplasmic reticulum membrane. The enzyme catalyses 4-carboxy-L-glutamyl-[protein] + 2,3-epoxyphylloquinone + H2O + H(+) = phylloquinol + L-glutamyl-[protein] + CO2 + O2. Its function is as follows. Mediates the vitamin K-dependent carboxylation of glutamate residues to calcium-binding gamma-carboxyglutamate (Gla) residues with the concomitant conversion of the reduced hydroquinone form of vitamin K to vitamin K epoxide. Catalyzes gamma-carboxylation of various proteins, such as blood coagulation factors (F2, F7, F9 and F10), osteocalcin (BGLAP) or matrix Gla protein (MGP). In Bos taurus (Bovine), this protein is Vitamin K-dependent gamma-carboxylase (GGCX).